We begin with the raw amino-acid sequence, 255 residues long: Putative glycyl-radical enzyme activating enzyme MJ1632 (255 aa).

The 216-residue stretch at 30-245 folds into the Radical SAM core domain; that stretch reads SHISLSDKIT…SNVSCSLDFK (216 aa). Cys-45, Cys-49, and Cys-52 together coordinate [4Fe-4S] cluster. S-adenosyl-L-methionine-binding positions include 51–53, Gly-88, and 134–136; these read YCF and DLK.

Belongs to the organic radical-activating enzymes family. [4Fe-4S] cluster serves as cofactor.

The enzyme catalyses glycyl-[protein] + reduced [flavodoxin] + S-adenosyl-L-methionine = glycin-2-yl radical-[protein] + semiquinone [flavodoxin] + 5'-deoxyadenosine + L-methionine + H(+). This is Putative glycyl-radical enzyme activating enzyme MJ1632 from Methanocaldococcus jannaschii (strain ATCC 43067 / DSM 2661 / JAL-1 / JCM 10045 / NBRC 100440) (Methanococcus jannaschii).